Reading from the N-terminus, the 328-residue chain is Mitochondrial thiamine pyrophosphate carrier 1 (328 aa).

3 Solcar repeats span residues 12-110, 120-208, and 221-316; these read GTRR…TTQL, PQPI…LRPV, and PPGS…ALKL. 6 helical membrane passes run 17–37, 79–99, 126–146, 185–205, 227–247, and 291–308; these read VVLA…PLDV, LTGL…YGGI, FISG…LDLL, SAAV…YEAL, AAAG…LDLV, and GLTV…VTMW.

This sequence belongs to the mitochondrial carrier (TC 2.A.29) family.

It is found in the mitochondrion inner membrane. Functionally, mitochondrial transporter that mediates uptake of thiamine pyrophosphate (ThPP) into mitochondria. The polypeptide is Mitochondrial thiamine pyrophosphate carrier 1 (tpc1) (Emericella nidulans (strain FGSC A4 / ATCC 38163 / CBS 112.46 / NRRL 194 / M139) (Aspergillus nidulans)).